The chain runs to 374 residues: Spore germination protein GerLB (374 aa).

Helical transmembrane passes span 16–36 (IGFAVSSTIIGIGALSMPRDI), 44–64 (DGWIILLLGGLICAVLGWFVT), 86–106 (PVAYTISSILVLTFAALTAYE), 122–142 (TPIQLLSFFFLLVVIYGIAGS), 149–169 (LNVLFLPIVLIAIVLLSLLNI), 192–212 (VKNSIFTFIGFEVALFYAVLL), 227–247 (AVMVNVLSYILIYVTCISVFT), 279–301 (FFTTWIITIYNTTAMYYDVASLL), 313–333 (IFIFISAPIIFMVNMIPSSLN), and 341–361 (YLAWIDMGCVVLAPLLVLIVY).

Belongs to the amino acid-polyamine-organocation (APC) superfamily. Spore germination protein (SGP) (TC 2.A.3.9) family.

Its subcellular location is the membrane. In terms of biological role, contributes to the L-alanine germination response. The sequence is that of Spore germination protein GerLB (gerLB) from Bacillus cereus.